Consider the following 944-residue polypeptide: Protein translocase subunit SecA (944 aa).

ATP is bound by residues Q87, 105–109 (GEGKT), and D494. The disordered stretch occupies residues 894 to 944 (HAAAAGDGEEKPRPKQETVVRTQPKVGRNDPCPCGSGKKYKKCHGATEAAV). Basic and acidic residues predominate over residues 901–911 (GEEKPRPKQET). Zn(2+)-binding residues include C925, C927, C936, and H937.

This sequence belongs to the SecA family. Monomer and homodimer. Part of the essential Sec protein translocation apparatus which comprises SecA, SecYEG and auxiliary proteins SecDF-YajC and YidC. It depends on Zn(2+) as a cofactor.

The protein localises to the cell inner membrane. Its subcellular location is the cytoplasm. The enzyme catalyses ATP + H2O + cellular proteinSide 1 = ADP + phosphate + cellular proteinSide 2.. In terms of biological role, part of the Sec protein translocase complex. Interacts with the SecYEG preprotein conducting channel. Has a central role in coupling the hydrolysis of ATP to the transfer of proteins into and across the cell membrane, serving as an ATP-driven molecular motor driving the stepwise translocation of polypeptide chains across the membrane. This chain is Protein translocase subunit SecA, found in Anaeromyxobacter sp. (strain Fw109-5).